A 393-amino-acid polypeptide reads, in one-letter code: Chalcone synthase DIII (393 aa).

Cys-164 is an active-site residue.

Belongs to the thiolase-like superfamily. Chalcone/stilbene synthases family.

It carries out the reaction (E)-4-coumaroyl-CoA + 3 malonyl-CoA + 3 H(+) = 2',4,4',6'-tetrahydroxychalcone + 3 CO2 + 4 CoA. Its pathway is secondary metabolite biosynthesis; flavonoid biosynthesis. Functionally, the primary product of this enzyme is 4,2',4',6'-tetrahydroxychalcone (also termed naringenin-chalcone or chalcone) which can under specific conditions spontaneously isomerize into naringenin. This is Chalcone synthase DIII (CHS-DIII) from Ipomoea batatas (Sweet potato).